A 389-amino-acid polypeptide reads, in one-letter code: 11-beta-hydroxysteroid dehydrogenase-like 5 (389 aa).

The helical; Signal-anchor for type II membrane protein transmembrane segment at Leu11–Ile31 threads the bilayer. NADP(+) is bound by residues Gly56–Arg82 and Asp107. Ser186 contributes to the substrate binding site. Catalysis depends on Tyr199, which acts as the Proton acceptor. NADP(+) is bound by residues Tyr199 to Lys203 and Lys203. Residues Leu337 to Phe381 form a disordered region. Positions Pro365–Pro378 are enriched in pro residues.

The protein belongs to the short-chain dehydrogenases/reductases (SDR) family.

Its subcellular location is the membrane. The polypeptide is 11-beta-hydroxysteroid dehydrogenase-like 5 (HSD5) (Arabidopsis thaliana (Mouse-ear cress)).